Here is a 535-residue protein sequence, read N- to C-terminus: Zinc transporter ZIP5 (535 aa).

The signal sequence occupies residues 1–19 (MGPPVHHLLTGLCVGVALG). At 20-210 (WVGGSVPNLG…PAPPGDVLSA (191 aa)) the chain is on the extracellular side. Residues Asn49 and Asn158 are each glycosylated (N-linked (GlcNAc...) asparagine). Residues 211–231 (LLHSGLAVLFLSLPAPLSLLL) form a helical membrane-spanning segment. The Cytoplasmic portion of the chain corresponds to 232-242 (LRLLGPRLLRP). Residues 243 to 263 (VLGFLGALAVGTLCGDALLHL) traverse the membrane as a helical segment. Over 264–285 (LPHAQGGRHTGPSEQSEEDLGP) the chain is Extracellular. Residues 286-306 (GLSVLGGLFLLFMLENTLGLV) form a helical membrane-spanning segment. Residues 307-439 (RHRGLRPRCC…LLQEGLSFRK (133 aa)) are Cytoplasmic-facing. Residues 316-373 (CRNKRDLGEPNPDPEDGSGMVLRPLQAASEPEVQGQRENRQSSPSLAPPGHQGHSHEH) are disordered. Ser333 carries the post-translational modification Phosphoserine. His371 is subject to Pros-methylhistidine. The chain crosses the membrane as a helical span at residues 440-460 (LLLLSLVSGALGLGGAALGVG). The Extracellular portion of the chain corresponds to 461–465 (LSLGP). A helical transmembrane segment spans residues 466–486 (VPLTPWVFGTTAGVFLYVALV). Residues 487–503 (DMLPTLLRPPEPLPVFH) lie on the Cytoplasmic side of the membrane. Residues 504–524 (VLLQGLGLLLGGSLMFTIALL) traverse the membrane as a helical segment. Over 525-535 (EEQLVPTVPDG) the chain is Extracellular.

Belongs to the ZIP transporter (TC 2.A.5) family. As to quaternary structure, homodimer. In terms of processing, N-Glycosylated. Post-translationally, methylated at His-371 by METTL9. In terms of tissue distribution, expressed in all stages of eye development and primarily in the sclera and several layers of the retina, including the inner segment, outer plexiform layer and ganglion cell layer. Expressed in pancreas, kidney and the proximal and distal small intestine as well as in the embryonic visceral yolk sac. In the proximal intestine, expression is predominant in the crypts but diminishes toward the apical regions of the villi.

It is found in the basolateral cell membrane. It carries out the reaction Zn(2+)(in) = Zn(2+)(out). Uniporter that transports zinc(2+) into polarized cells of enterocytes, pancreatic acinar and endoderm cells across the basolateral membrane and participates, notably, in zinc excretion from the intestine by the uptake of zinc from the blood into the intestine. The transport mechanism is temperature- and concentration-dependent and saturable. In addition, is also a high affinity copper transporter in vitro. Also may regulate glucose-stimulated insulin secretion (GSIS) in islets primarily through the zinc-activated SIRT1-PPARGC1A axis. Could regulate the BMP/TGF-beta (bone morphogenetic protein/transforming growth factor-beta) signaling pathway and modulates extracellular matrix (ECM) proteins of the sclera. Plays a role in eye development. The sequence is that of Zinc transporter ZIP5 from Mus musculus (Mouse).